Consider the following 403-residue polypeptide: Acetate kinase (403 aa).

Asn7 is a Mg(2+) binding site. ATP is bound at residue Lys14. Substrate is bound at residue Arg97. The active-site Proton donor/acceptor is the Asp154. Residues 213 to 217 (HLGNG), 287 to 289 (DMR), and 335 to 339 (GIGEN) contribute to the ATP site. Residue Glu388 participates in Mg(2+) binding.

This sequence belongs to the acetokinase family. As to quaternary structure, homodimer. Mg(2+) serves as cofactor. It depends on Mn(2+) as a cofactor.

It localises to the cytoplasm. It catalyses the reaction acetate + ATP = acetyl phosphate + ADP. The protein operates within metabolic intermediate biosynthesis; acetyl-CoA biosynthesis; acetyl-CoA from acetate: step 1/2. Functionally, catalyzes the formation of acetyl phosphate from acetate and ATP. Can also catalyze the reverse reaction. This is Acetate kinase from Synechococcus sp. (strain JA-2-3B'a(2-13)) (Cyanobacteria bacterium Yellowstone B-Prime).